Reading from the N-terminus, the 163-residue chain is D-aminoacyl-tRNA deacylase (163 aa).

The short motif at Gly-141–Pro-142 is the Gly-cisPro motif, important for rejection of L-amino acids element.

Belongs to the DTD family. In terms of assembly, homodimer.

It is found in the cytoplasm. It carries out the reaction glycyl-tRNA(Ala) + H2O = tRNA(Ala) + glycine + H(+). It catalyses the reaction a D-aminoacyl-tRNA + H2O = a tRNA + a D-alpha-amino acid + H(+). Functionally, an aminoacyl-tRNA editing enzyme that deacylates mischarged D-aminoacyl-tRNAs. Also deacylates mischarged glycyl-tRNA(Ala), protecting cells against glycine mischarging by AlaRS. Acts via tRNA-based rather than protein-based catalysis; rejects L-amino acids rather than detecting D-amino acids in the active site. By recycling D-aminoacyl-tRNA to D-amino acids and free tRNA molecules, this enzyme counteracts the toxicity associated with the formation of D-aminoacyl-tRNA entities in vivo and helps enforce protein L-homochirality. The polypeptide is D-aminoacyl-tRNA deacylase (Neisseria meningitidis serogroup A / serotype 4A (strain DSM 15465 / Z2491)).